The chain runs to 335 residues: Cathepsin B (335 aa).

Residues 1–17 form the signal peptide; that stretch reads MWRLLATLSCLVLLTSA. A propeptide spans 18–79 (activation peptide); the sequence is RESLHFQPLS…QRAAFAADMI (62 aa). 6 disulfides stabilise this stretch: Cys93–Cys122, Cys105–Cys150, Cys141–Cys207, Cys142–Cys146, Cys179–Cys211, and Cys187–Cys198. Residue Cys108 is part of the active site. The N-linked (GlcNAc...) asparagine glycan is linked to Asn192. Lys220 carries the N6-acetyllysine modification. A disulfide bridge connects residues Cys227 and Cys331. Catalysis depends on residues His278 and Asn298. Residues 333–335 constitute a propeptide that is removed on maturation; sequence PHF.

Belongs to the peptidase C1 family. As to quaternary structure, dimer of a heavy chain and a light chain cross-linked by a disulfide bond. Interacts with SRPX2. Directly interacts with SHKBP1. As to expression, expressed in heart (at protein level).

Its subcellular location is the lysosome. The protein localises to the melanosome. It is found in the secreted. The protein resides in the extracellular space. It localises to the apical cell membrane. The enzyme catalyses Hydrolysis of proteins with broad specificity for peptide bonds. Preferentially cleaves -Arg-Arg-|-Xaa bonds in small molecule substrates (thus differing from cathepsin L). In addition to being an endopeptidase, shows peptidyl-dipeptidase activity, liberating C-terminal dipeptides.. In terms of biological role, thiol protease which is believed to participate in intracellular degradation and turnover of proteins. Cleaves matrix extracellular phosphoglycoprotein MEPE. Involved in the solubilization of cross-linked TG/thyroglobulin in the thyroid follicle lumen. Has also been implicated in tumor invasion and metastasis. In Sus scrofa (Pig), this protein is Cathepsin B (CTSB).